A 544-amino-acid polypeptide reads, in one-letter code: Homeobox protein B-H1 (544 aa).

Positions 53–70 (STTTMSSGGSTTTASGIG) are enriched in low complexity. 4 disordered regions span residues 53–73 (STTT…GKPN), 92–179 (YKQQ…PPTA), 236–308 (GGVG…AFTD), and 471–544 (AANP…QIQV). Basic residues predominate over residues 95–105 (QQHHQQLHHHN). Low complexity predominate over residues 106–131 (NNNNSGSSGGSSPAHSNNNNNINGDN). Positions 156 to 172 (THPHTHPHALMHPHGKL) are enriched in basic residues. The span at 247–262 (DLDDSSDYHEENEDCD) shows a compositional bias: acidic residues. Over residues 266 to 282 (MDDHSVCSNGGKDDDGN) the composition is skewed to basic and acidic residues. A compositionally biased stretch (polar residues) spans 283–293 (SVKSGSTSDMS). Positions 299–358 (QRKARTAFTDHQLQTLEKSFERQKYLSVQERQELAHKLDLSDCQVKTWYQNRRTKWKRQT) form a DNA-binding region, homeobox. Residues 476–485 (GPHPVAPPPS) show a composition bias toward pro residues. The span at 492–506 (PSGLVKPIPAHSASA) shows a compositional bias: low complexity. A compositionally biased stretch (pro residues) spans 507–516 (SPPPRPPSTP).

It belongs to the Antp homeobox family. As to expression, B-H1 and B-H2 are abundant in the eye-antenna imaginal disk. Expressed in R1 and R6 cells throughout larval stage until 30 hours after puparium formation, at which time expression is seen in the anterior and posterior primary pigment cells. Coexpressed in embryonic glial cells, neurons of the CNS and PNS, most latitudinal anterior cells of the developing notum and the central circular region of the leg and antennal imaginal disk throughout larval development.

It is found in the nucleus. Functionally, B-H1 and B-H2 are regulated by members of the wg signaling pathway; wg and dpp. B-H1 and B-H2 are coexpressed and functionally required in R1 and R6 receptor cells and primary pigment cells for normal eye development. Coexpression is also required for the fate determination of external sensory organs, formation of notal microchaetae, formation of presutural macrochaetae, antennal development and for distal leg morphogenesis; segmentation and specification of tarsal segments 3-5. This Drosophila melanogaster (Fruit fly) protein is Homeobox protein B-H1 (B-H1).